We begin with the raw amino-acid sequence, 141 residues long: Nucleoside diphosphate kinase (141 aa).

The ATP site is built by lysine 9, phenylalanine 57, arginine 85, threonine 91, arginine 102, and asparagine 112. Histidine 115 serves as the catalytic Pros-phosphohistidine intermediate.

This sequence belongs to the NDK family. In terms of assembly, homotetramer. Requires Mg(2+) as cofactor.

It is found in the cytoplasm. It catalyses the reaction a 2'-deoxyribonucleoside 5'-diphosphate + ATP = a 2'-deoxyribonucleoside 5'-triphosphate + ADP. The catalysed reaction is a ribonucleoside 5'-diphosphate + ATP = a ribonucleoside 5'-triphosphate + ADP. Functionally, major role in the synthesis of nucleoside triphosphates other than ATP. The ATP gamma phosphate is transferred to the NDP beta phosphate via a ping-pong mechanism, using a phosphorylated active-site intermediate. This chain is Nucleoside diphosphate kinase, found in Chlamydia trachomatis serovar D (strain ATCC VR-885 / DSM 19411 / UW-3/Cx).